The sequence spans 251 residues: Octanoyltransferase (251 aa).

One can recognise a BPL/LPL catalytic domain in the interval 29–216 (GVIQDTLLLL…NFGFIFKEQV (188 aa)). Substrate is bound by residues 74 to 81 (RGGDVTFH), 146 to 148 (AIG), and 159 to 161 (GFA). Cysteine 177 functions as the Acyl-thioester intermediate in the catalytic mechanism.

It belongs to the LipB family.

Its subcellular location is the cytoplasm. The catalysed reaction is octanoyl-[ACP] + L-lysyl-[protein] = N(6)-octanoyl-L-lysyl-[protein] + holo-[ACP] + H(+). It participates in protein modification; protein lipoylation via endogenous pathway; protein N(6)-(lipoyl)lysine from octanoyl-[acyl-carrier-protein]: step 1/2. Functionally, catalyzes the transfer of endogenously produced octanoic acid from octanoyl-acyl-carrier-protein onto the lipoyl domains of lipoate-dependent enzymes. Lipoyl-ACP can also act as a substrate although octanoyl-ACP is likely to be the physiological substrate. This chain is Octanoyltransferase, found in Koribacter versatilis (strain Ellin345).